A 310-amino-acid polypeptide reads, in one-letter code: Junctional adhesion molecule C (310 aa).

Positions 1-29 are cleaved as a signal peptide; the sequence is MALSRRLRLRLYARLPDFFLLLLFRGCMI. Over 30-241 the chain is Extracellular; sequence EAVNLKSSNR…GQDMEVYDLN (212 aa). In terms of domain architecture, Ig-like V-type spans 35-127; it reads KSSNRNPVVH…VALNDRKEVD (93 aa). Disulfide bonds link C53/C115 and C160/C219. N-linked (GlcNAc...) asparagine glycans are attached at residues N104 and N192. Residues 139–236 form the Ig-like C2-type domain; sequence PVTPVCRIPA…AARCEGQDME (98 aa). Residues 242 to 262 form a helical membrane-spanning segment; it reads IAGIIGGVLVVLIVLAVITMG. Topologically, residues 263–310 are cytoplasmic; it reads ICCAYRRGCFISSKQDGESYKSPGKHDGVNYIRTSEEGDFRHKSSFVI. 2 S-palmitoyl cysteine lipidation sites follow: C264 and C265.

It belongs to the immunoglobulin superfamily. As to quaternary structure, interacts with ITGAM. Interacts with GORASP2. In terms of processing, proteolytically cleaved from endothelial cells surface into a soluble form by ADAM10 and ADAM17; the release of soluble JAM3 is increased by pro-inflammatory factors. Post-translationally, N-glycosylated. S-palmitoylated by ZDHHC7. S-palmitoylation promotes expression at tight junctions. In terms of tissue distribution, colocalizes with Jam2 near the lumen of seminiferous tubulues. Detected at junctional plaques that correspond to cell-cell contacts between spermatids and Sertoli cells. Detected on endothelial cells, in brain vessels and kidney glomeruli (at protein level). Detected in heart, lung, liver, kidney, testis, thymus, lymph node and Peyer patch. Endothelial cells.

It is found in the cell membrane. The protein resides in the cell junction. Its subcellular location is the desmosome. The protein localises to the tight junction. It localises to the secreted. In terms of biological role, junctional adhesion protein that mediates heterotypic cell-cell interactions with its cognate receptor JAM2 to regulate different cellular processes. Plays a role in homing and mobilization of hematopoietic stem and progenitor cells within the bone marrow. At the surface of bone marrow stromal cells, it contributes to the retention of the hematopoietic stem and progenitor cells expressing JAM3. Plays a central role in leukocytes extravasation by facilitating transmigration through the endothelium. Plays a role in spermatogenesis where JAM2 and JAM3, which are respectively expressed by Sertoli and germ cells, mediate an interaction between both cell types and play an essential role in the anchorage of germ cells onto Sertoli cells and the assembly of cell polarity complexes during spermatid differentiation. Also functions as a counter-receptor for ITGAM, mediating leukocyte-platelet interactions and is involved in the regulation of transepithelial migration of polymorphonuclear neutrophils (PMN). Plays a role in angiogenesis. Plays a role in the regulation of cell migration. During myogenesis, it is involved in myocyte fusion. Its function is as follows. Promotes chemotaxis of vascular endothelial cells and stimulates angiogenesis. The chain is Junctional adhesion molecule C (Jam3) from Mus musculus (Mouse).